A 632-amino-acid polypeptide reads, in one-letter code: uncharacterized protein (632 aa).

It belongs to the MG032/MG096/MG288 family.

This is an uncharacterized protein from Mycoplasma pneumoniae (strain ATCC 29342 / M129 / Subtype 1) (Mycoplasmoides pneumoniae).